The primary structure comprises 94 residues: Co-chaperonin GroES (94 aa).

This sequence belongs to the GroES chaperonin family. In terms of assembly, heptamer of 7 subunits arranged in a ring. Interacts with the chaperonin GroEL.

Its subcellular location is the cytoplasm. Its function is as follows. Together with the chaperonin GroEL, plays an essential role in assisting protein folding. The GroEL-GroES system forms a nano-cage that allows encapsulation of the non-native substrate proteins and provides a physical environment optimized to promote and accelerate protein folding. GroES binds to the apical surface of the GroEL ring, thereby capping the opening of the GroEL channel. The chain is Co-chaperonin GroES from Lactobacillus gasseri (strain ATCC 33323 / DSM 20243 / BCRC 14619 / CIP 102991 / JCM 1131 / KCTC 3163 / NCIMB 11718 / NCTC 13722 / AM63).